Consider the following 258-residue polypeptide: Imidazole glycerol phosphate synthase subunit HisF (258 aa).

Catalysis depends on residues Asp11 and Asp130.

This sequence belongs to the HisA/HisF family. In terms of assembly, heterodimer of HisH and HisF.

Its subcellular location is the cytoplasm. The catalysed reaction is 5-[(5-phospho-1-deoxy-D-ribulos-1-ylimino)methylamino]-1-(5-phospho-beta-D-ribosyl)imidazole-4-carboxamide + L-glutamine = D-erythro-1-(imidazol-4-yl)glycerol 3-phosphate + 5-amino-1-(5-phospho-beta-D-ribosyl)imidazole-4-carboxamide + L-glutamate + H(+). It functions in the pathway amino-acid biosynthesis; L-histidine biosynthesis; L-histidine from 5-phospho-alpha-D-ribose 1-diphosphate: step 5/9. IGPS catalyzes the conversion of PRFAR and glutamine to IGP, AICAR and glutamate. The HisF subunit catalyzes the cyclization activity that produces IGP and AICAR from PRFAR using the ammonia provided by the HisH subunit. The chain is Imidazole glycerol phosphate synthase subunit HisF from Synechococcus sp. (strain CC9902).